We begin with the raw amino-acid sequence, 225 residues long: NAD(P)H-quinone oxidoreductase subunit K, chloroplastic (225 aa).

Positions 43, 44, 108, and 139 each coordinate [4Fe-4S] cluster.

This sequence belongs to the complex I 20 kDa subunit family. NDH is composed of at least 16 different subunits, 5 of which are encoded in the nucleus. [4Fe-4S] cluster is required as a cofactor.

Its subcellular location is the plastid. It is found in the chloroplast thylakoid membrane. It carries out the reaction a plastoquinone + NADH + (n+1) H(+)(in) = a plastoquinol + NAD(+) + n H(+)(out). The enzyme catalyses a plastoquinone + NADPH + (n+1) H(+)(in) = a plastoquinol + NADP(+) + n H(+)(out). Functionally, NDH shuttles electrons from NAD(P)H:plastoquinone, via FMN and iron-sulfur (Fe-S) centers, to quinones in the photosynthetic chain and possibly in a chloroplast respiratory chain. The immediate electron acceptor for the enzyme in this species is believed to be plastoquinone. Couples the redox reaction to proton translocation, and thus conserves the redox energy in a proton gradient. This is NAD(P)H-quinone oxidoreductase subunit K, chloroplastic from Nicotiana tabacum (Common tobacco).